The chain runs to 218 residues: Small ribosomal subunit protein uS3 (218 aa).

Residues Ile-38–Lys-106 enclose the KH type-2 domain.

This sequence belongs to the universal ribosomal protein uS3 family. Part of the 30S ribosomal subunit. Forms a tight complex with proteins S10 and S14.

Binds the lower part of the 30S subunit head. Binds mRNA in the 70S ribosome, positioning it for translation. This is Small ribosomal subunit protein uS3 from Geobacillus sp. (strain WCH70).